The sequence spans 105 residues: uncharacterized protein (105 aa).

Residues 80–105 (TGGPTSSTCTRRSDLATGRGSDRRPD) are disordered.

This is an uncharacterized protein from Micromonospora rosea.